The following is a 349-amino-acid chain: GTP 3',8-cyclase (349 aa).

The Radical SAM core domain occupies 26–245; that stretch reads GFGRAVTYLR…SSFWTLTDIP (220 aa). Position 35 (Arg-35) interacts with GTP. [4Fe-4S] cluster-binding residues include Cys-42 and Cys-46. Tyr-48 is an S-adenosyl-L-methionine binding site. [4Fe-4S] cluster is bound at residue Cys-49. Position 84 (Arg-84) interacts with GTP. Residue Gly-88 coordinates S-adenosyl-L-methionine. Position 118 (Thr-118) interacts with GTP. Ser-142 is an S-adenosyl-L-methionine binding site. Lys-178 lines the GTP pocket. An S-adenosyl-L-methionine-binding site is contributed by Met-212. [4Fe-4S] cluster is bound by residues Cys-275 and Cys-278. GTP is bound at residue 280-282; that stretch reads RVR. Cys-292 is a [4Fe-4S] cluster binding site.

This sequence belongs to the radical SAM superfamily. MoaA family. As to quaternary structure, monomer and homodimer. It depends on [4Fe-4S] cluster as a cofactor.

It catalyses the reaction GTP + AH2 + S-adenosyl-L-methionine = (8S)-3',8-cyclo-7,8-dihydroguanosine 5'-triphosphate + 5'-deoxyadenosine + L-methionine + A + H(+). It functions in the pathway cofactor biosynthesis; molybdopterin biosynthesis. In terms of biological role, catalyzes the cyclization of GTP to (8S)-3',8-cyclo-7,8-dihydroguanosine 5'-triphosphate. This Caulobacter vibrioides (strain ATCC 19089 / CIP 103742 / CB 15) (Caulobacter crescentus) protein is GTP 3',8-cyclase.